The following is a 507-amino-acid chain: Ribose import ATP-binding protein RbsA 2 (507 aa).

ABC transporter domains lie at 7-245 and 249-498; these read FSLD…VGRN and LFTR…MPQS. ATP is bound at residue 39–46; that stretch reads GENGAGKS.

It belongs to the ABC transporter superfamily. Ribose importer (TC 3.A.1.2.1) family. In terms of assembly, the complex is composed of an ATP-binding protein (RbsA), two transmembrane proteins (RbsC) and a solute-binding protein (RbsB).

The protein resides in the cell inner membrane. It catalyses the reaction D-ribose(out) + ATP + H2O = D-ribose(in) + ADP + phosphate + H(+). Functionally, part of the ABC transporter complex RbsABC involved in ribose import. Responsible for energy coupling to the transport system. In Mesorhizobium japonicum (strain LMG 29417 / CECT 9101 / MAFF 303099) (Mesorhizobium loti (strain MAFF 303099)), this protein is Ribose import ATP-binding protein RbsA 2.